The sequence spans 500 residues: Signal transduction histidine-protein kinase/phosphatase UhpB (500 aa).

8 consecutive transmembrane segments (helical) span residues leucine 8–isoleucine 28, valine 78–alanine 98, leucine 112–glycine 132, alanine 140–histidine 160, histidine 185–alanine 205, leucine 207–tryptophan 224, alanine 231–histidine 249, and valine 253–isoleucine 273. Residues glutamine 274–valine 500 lie on the Cytoplasmic side of the membrane. The Histidine kinase domain occupies glutamate 311 to tyrosine 499. Position 313 is a phosphohistidine; by autocatalysis (histidine 313).

Post-translationally, autophosphorylated.

The protein localises to the cell inner membrane. The catalysed reaction is ATP + protein L-histidine = ADP + protein N-phospho-L-histidine.. Functionally, part of the UhpABC signaling cascade that controls the expression of the hexose phosphate transporter UhpT. UhpB functions as a membrane-associated protein kinase that autophosphorylates in response to interaction with UhpC, and subsequently transfers its phosphate group to the response regulator UhpA. Can also dephosphorylate UhpA. This chain is Signal transduction histidine-protein kinase/phosphatase UhpB (uhpB), found in Salmonella typhimurium (strain LT2 / SGSC1412 / ATCC 700720).